The chain runs to 609 residues: DNA polymerase alpha subunit B (609 aa).

S155 is subject to Phosphoserine. A Phosphothreonine modification is found at T164. S166 and S168 each carry phosphoserine.

It belongs to the DNA polymerase alpha subunit B family. As to quaternary structure, component of the alpha DNA polymerase complex (also known as the alpha DNA polymerase-primase complex) consisting of four subunits: the catalytic subunit PolA1, the regulatory subunit PolA2, and the primase complex subunits Prim1 and Prim2 respectively. PolA1 associates with the DNA primase complex before association with PolA2. Post-translationally, phosphorylated in embryos until cycle 13. In terms of tissue distribution, expressed in embryos (at protein level).

The protein resides in the nucleus. Its function is as follows. Accessory subunit of the DNA polymerase alpha complex (also known as the alpha DNA polymerase-primase complex) which plays an essential role in the initiation of DNA synthesis. During the S phase of the cell cycle, the DNA polymerase alpha complex (composed of a catalytic subunit PolA1, an accessory subunit PolA2 and two primase subunits, the catalytic subunit Prim1 and the regulatory subunit Prim2) is recruited to DNA at the replicative forks. The primase subunit of the polymerase alpha complex initiates DNA synthesis by oligomerising short RNA primers on both leading and lagging strands. These primers are initially extended by the polymerase alpha catalytic subunit and subsequently transferred to polymerase delta and polymerase epsilon for processive synthesis on the lagging and leading strand, respectively. The protein is DNA polymerase alpha subunit B of Drosophila melanogaster (Fruit fly).